Here is a 236-residue protein sequence, read N- to C-terminus: Purine nucleoside phosphorylase DeoD-type 1 (236 aa).

Position 5 (histidine 5) interacts with a purine D-ribonucleoside. Residues glycine 21, arginine 25, arginine 44, and 88 to 91 (RVGS) each bind phosphate. Residues 180–182 (EME) and 204–205 (TD) each bind a purine D-ribonucleoside. The active-site Proton donor is aspartate 205.

It belongs to the PNP/UDP phosphorylase family. Homohexamer; trimer of homodimers.

It carries out the reaction a purine D-ribonucleoside + phosphate = a purine nucleobase + alpha-D-ribose 1-phosphate. The catalysed reaction is a purine 2'-deoxy-D-ribonucleoside + phosphate = a purine nucleobase + 2-deoxy-alpha-D-ribose 1-phosphate. Catalyzes the reversible phosphorolytic breakdown of the N-glycosidic bond in the beta-(deoxy)ribonucleoside molecules, with the formation of the corresponding free purine bases and pentose-1-phosphate. The protein is Purine nucleoside phosphorylase DeoD-type 1 of Shewanella oneidensis (strain ATCC 700550 / JCM 31522 / CIP 106686 / LMG 19005 / NCIMB 14063 / MR-1).